The sequence spans 350 residues: Glucose-6-phosphate 3-dehydrogenase (350 aa).

It belongs to the Gfo/Idh/MocA family.

The catalysed reaction is D-glucose 6-phosphate + NAD(+) = 3-dehydro-D-glucose 6-phosphate + NADH + H(+). The protein operates within antibiotic biosynthesis; kanosamine biosynthesis. In terms of biological role, involved in the biosynthesis of kanosamine (3-amino-3-deoxy-D-glucose), which is known to have antibiotic and antifungal properties, and to be a precursor of the antibiotic neotrehalosadiamine (3,3'-diamino-3,3'-dideoxy-alpha,beta-trehalose (NTD)). Catalyzes the oxidation of glucose 6-phosphate to 3-oxo-D-glucose 6-phosphate. It can only use NAD. In Bacillus subtilis (strain 168), this protein is Glucose-6-phosphate 3-dehydrogenase (ntdC).